Reading from the N-terminus, the 130-residue chain is Glycine cleavage system H protein (130 aa).

A Lipoyl-binding domain is found at 25–107 (IATIGITEFA…YGEGWFLKVR (83 aa)). At Lys66 the chain carries N6-lipoyllysine.

This sequence belongs to the GcvH family. The glycine cleavage system is composed of four proteins: P, T, L and H. Requires (R)-lipoate as cofactor.

The glycine cleavage system catalyzes the degradation of glycine. The H protein shuttles the methylamine group of glycine from the P protein to the T protein. The chain is Glycine cleavage system H protein from Nostoc sp. (strain PCC 7120 / SAG 25.82 / UTEX 2576).